The sequence spans 1023 residues: GATOR2 complex protein WDR24 (1023 aa).

7 WD repeats span residues 16–54 (NLGS…FKVT), 64–108 (SLNY…SKSV), 114–154 (DHSR…NASK), 159–199 (PKSE…IAVE), 203–243 (SHQG…SLNN), 245–287 (STIS…IPLF), and 291–329 (DHRD…KPYQ). Positions 563–578 (SKNIIDNSNDSNQEIN) are enriched in low complexity. Disordered stretches follow at residues 563–621 (SKNI…EPPS) and 661–824 (QKST…SIEN). Over residues 584 to 593 (KEDEEEDDDN) the composition is skewed to acidic residues. Residues 661–681 (QKSTDNISDNNSNVHVNIKRQ) are compositionally biased toward polar residues. Residues 682–695 (NQPTNNNNNNSNID) are compositionally biased toward low complexity. Basic and acidic residues predominate over residues 696–742 (NLEKKSNKSKSTKENKESSLTDQNKQKRNDNKEKIDNNEIDNDNKDN). The span at 743-759 (NDDDDNDVDNIGEDNDE) shows a compositional bias: acidic residues. Residues 760–812 (INNNNDNNNNNNNNNNNNNNNNNNNNNNNNNNNNNNNNKNNNNDNNNNNNINN) are compositionally biased toward low complexity. Residues 947–969 (ACSSCGKSIPQNSIICEKCNKAS) form a C4-type zinc finger. Zn(2+) contacts are provided by C948, C951, C962, C965, C972, C975, C986, C989, H991, H994, H997, C1010, C1014, H1016, and C1018. An RING-type; atypical zinc finger spans residues 970–1021 (SKCSICRLPVKGMWVWCQGCGHGGHLEHMKSWFIDKNQKSCPTGCTHICTPF).

Belongs to the WD repeat WDR24 family. In terms of assembly, probably part of the GATOR complex.

It localises to the lysosome membrane. It catalyses the reaction S-ubiquitinyl-[E2 ubiquitin-conjugating enzyme]-L-cysteine + [acceptor protein]-L-lysine = [E2 ubiquitin-conjugating enzyme]-L-cysteine + N(6)-ubiquitinyl-[acceptor protein]-L-lysine.. It functions in the pathway protein modification; protein ubiquitination. Functionally, as a component of the GATOR complex may function in the amino acid-sensing branch of the TORC1 signaling pathway. This Dictyostelium discoideum (Social amoeba) protein is GATOR2 complex protein WDR24.